We begin with the raw amino-acid sequence, 98 residues long: NADH-ubiquinone oxidoreductase chain 4L (98 aa).

Transmembrane regions (helical) follow at residues 2–22, 26–46, and 61–81; these read TLVM…TLMF, LMST…MAVI, and IIIL…LAMV.

It belongs to the complex I subunit 4L family. Core subunit of respiratory chain NADH dehydrogenase (Complex I) which is composed of 45 different subunits.

The protein localises to the mitochondrion inner membrane. The catalysed reaction is a ubiquinone + NADH + 5 H(+)(in) = a ubiquinol + NAD(+) + 4 H(+)(out). In terms of biological role, core subunit of the mitochondrial membrane respiratory chain NADH dehydrogenase (Complex I) which catalyzes electron transfer from NADH through the respiratory chain, using ubiquinone as an electron acceptor. Part of the enzyme membrane arm which is embedded in the lipid bilayer and involved in proton translocation. This Nyctomys sumichrasti (Sumichrast's vesper rat) protein is NADH-ubiquinone oxidoreductase chain 4L (MT-ND4L).